The primary structure comprises 105 residues: Large ribosomal subunit protein uL24 (105 aa).

The protein belongs to the universal ribosomal protein uL24 family. As to quaternary structure, part of the 50S ribosomal subunit.

One of two assembly initiator proteins, it binds directly to the 5'-end of the 23S rRNA, where it nucleates assembly of the 50S subunit. Its function is as follows. One of the proteins that surrounds the polypeptide exit tunnel on the outside of the subunit. This chain is Large ribosomal subunit protein uL24, found in Francisella tularensis subsp. tularensis (strain FSC 198).